Here is a 125-residue protein sequence, read N- to C-terminus: uncharacterized protein (125 aa).

Residues Q15 to L121 form the PRD domain.

This is an uncharacterized protein from Haemophilus influenzae (strain ATCC 51907 / DSM 11121 / KW20 / Rd).